We begin with the raw amino-acid sequence, 220 residues long: UPF0319 protein CKO_02102 (220 aa).

The signal sequence occupies residues 1-20; the sequence is MKTGIITMLFVLYLPVTAFA.

The protein belongs to the UPF0319 family.

The sequence is that of UPF0319 protein CKO_02102 from Citrobacter koseri (strain ATCC BAA-895 / CDC 4225-83 / SGSC4696).